A 227-amino-acid polypeptide reads, in one-letter code: 2-C-methyl-D-erythritol 4-phosphate cytidylyltransferase (227 aa).

The protein belongs to the IspD/TarI cytidylyltransferase family. IspD subfamily.

The enzyme catalyses 2-C-methyl-D-erythritol 4-phosphate + CTP + H(+) = 4-CDP-2-C-methyl-D-erythritol + diphosphate. It functions in the pathway isoprenoid biosynthesis; isopentenyl diphosphate biosynthesis via DXP pathway; isopentenyl diphosphate from 1-deoxy-D-xylulose 5-phosphate: step 2/6. Functionally, catalyzes the formation of 4-diphosphocytidyl-2-C-methyl-D-erythritol from CTP and 2-C-methyl-D-erythritol 4-phosphate (MEP). In Lachnospira eligens (strain ATCC 27750 / DSM 3376 / VPI C15-48 / C15-B4) (Eubacterium eligens), this protein is 2-C-methyl-D-erythritol 4-phosphate cytidylyltransferase.